The sequence spans 765 residues: 1,4-alpha-glucan branching enzyme GlgB (765 aa).

Aspartate 431 (nucleophile) is an active-site residue. Glutamate 484 (proton donor) is an active-site residue.

It belongs to the glycosyl hydrolase 13 family. GlgB subfamily. As to quaternary structure, monomer.

The enzyme catalyses Transfers a segment of a (1-&gt;4)-alpha-D-glucan chain to a primary hydroxy group in a similar glucan chain.. The protein operates within glycan biosynthesis; glycogen biosynthesis. Functionally, catalyzes the formation of the alpha-1,6-glucosidic linkages in glycogen by scission of a 1,4-alpha-linked oligosaccharide from growing alpha-1,4-glucan chains and the subsequent attachment of the oligosaccharide to the alpha-1,6 position. This Synechococcus sp. (strain CC9605) protein is 1,4-alpha-glucan branching enzyme GlgB.